The chain runs to 299 residues: Peroxisomal biogenesis factor 19 (299 aa).

Positions 1–63 (MAAAEEGCSV…SPGDTAKDAL (63 aa)) are disordered. N-acetylalanine is present on Ala-2. A docking to the peroxisome membrane and binding to PEX3 region spans residues 2–56 (AAAEEGCSVGAEADRELEELLESALDDFDKAKPSPAPPSTTTAPDASGPQKRSPG). The necessary for PEX19 function on peroxisome biogenesis stretch occupies residues 2–91 (AAAEEGCSVG…QATAEFEKAM (90 aa)). The span at 16 to 27 (RELEELLESALD) shows a compositional bias: acidic residues. Residues Ser-35, Ser-54, and Ser-66 each carry the phosphoserine modification. The residue at position 236 (Thr-236) is a Phosphothreonine. A Cysteine methyl ester modification is found at Cys-296. Cys-296 is lipidated: S-farnesyl cysteine. Residues 297–299 (LIM) constitute a propeptide, removed in mature form.

This sequence belongs to the peroxin-19 family. In terms of assembly, interacts with a broad range of peroxisomal membrane proteins, including PEX3, PEX10, PEX11A, PEX11B, PEX12, PEX13, PEX14 and PEX16, PXMP2/PMP22, PXMP4/PMP24, SLC25A17/PMP34, ABCD1/ALDP, ABCD2/ALDRP, and ABCD3/PMP70. Also interacts with the tumor suppressor CDKN2A/p19ARF. (Microbial infection) Interacts with human cytomegalovirus protein UL37 isoform vMIA; this interaction inhibits the peroxisomal-dependent antiviral signaling. In terms of tissue distribution, ubiquitously expressed. Isoform 1 is strongly predominant in all tissues except in utero where isoform 2 is the main form.

Its subcellular location is the cytoplasm. The protein localises to the peroxisome membrane. In terms of biological role, necessary for early peroxisomal biogenesis. Acts both as a cytosolic chaperone and as an import receptor for peroxisomal membrane proteins (PMPs). Binds and stabilizes newly synthesized PMPs in the cytoplasm by interacting with their hydrophobic membrane-spanning domains, and targets them to the peroxisome membrane by binding to the integral membrane protein PEX3. Excludes CDKN2A from the nucleus and prevents its interaction with MDM2, which results in active degradation of TP53. In Homo sapiens (Human), this protein is Peroxisomal biogenesis factor 19.